We begin with the raw amino-acid sequence, 67 residues long: uncharacterized protein (67 aa).

A run of 2 helical transmembrane segments spans residues 10 to 30 (EFFI…IIMW) and 40 to 60 (LMVG…WMVF).

This sequence belongs to the plectrovirus ORF10 family.

The protein localises to the host membrane. This is an uncharacterized protein from Spiroplasma melliferum (SpV1).